Here is a 1337-residue protein sequence, read N- to C-terminus: MLDVNEFDKLRIGLATADDIRNWSYGEVKKPETINYRTLKPEKDGLFGEQIFGPTRDWECACGKYKRVRFKGIVCERCGVEVTKSRVRRERMGHIELAAPVTHIWFFKGVPSRLGYLLDIAPKDLEKVIYFAAYMVTKVDEEQRHQDLPDLQQEFDNEIANLEKRRNAEIEERAKKVEADLAELEAEGEAKGSARAKLRNSAEREMAAIRTRYDEQIQRLSAVFDRFKTLKPGDMEGDVDLWREMEDRYGDYFEGCMGAEAIKKRLQDFDLEAASKQLREEIDTGTGQRKARALKRLKVVNAFLTTGNKPEAMVLDVIPVIPPDLRPMVQLDGGRFATSDLNDLYRRVINRNNRLKRLIELGAPEIMLNNEKRMLQEAVDSLFDNGRRGRPVTGASNRPLKSLSDMLKGKQGRFRQNLLGKRVDYSGRSVIVVGPSLRMHQCGLPKPMALELFKPFVIKRLVDQGFAQNMKSAKRLVDRADSEVWGVLEEVISEHPVLLNRAPTLHRLGIQAFEPILVEGKAIHLPPLACAAFNADFDGDQMAVHLPLSAEAQAEARSLMMASDNILKPADGHTVTMPSQDMILGLYYLTTVIDGAKGQGRVFSSLEEAEMALDKHEIDMQAKVLIRLPQDFVLPKDWEPGEVKVVDPEPGSPDVVKEERFHDGSVLFATSYGRILFNGTLPVDYPFVNEQAPKKRLSKIVDDIATRYSTAQVAATLDALKDLGFTRAPWSGVSFAFSDVIQPPELDEYIEKYEGEADKVNENYEIGMLTEEERRQELVDLWTKCTSEVSEAVEEHFDSKNNLAIIVQSGARGNMMQINQIAGMRGLVANPKGEIIPRPVKSNYRKGLSVLEYFISQHGARKGLADTALRTAESGYLTRRLVDVSQDVIVREEDCGTKRGLTMKVGERDAEGNLHLVKAADGGPYSRLLAADVIDPADGETVLYKAGDALSMDVLNDLVAHGVEEVKARSVLTCESKRGVCAKCYGWSLATNKLVDVGEAVGIVAAQSIGEPGTQLTLRSFHSGGVASASDITQGLPRVTELFEARTPKGEAPIAEFAGVVKVEDTERGRQVTLKPDDDSVEPIVYPVTRRAPMLVKDGDHVEAGTQLIEGSVDPKKILRILGPRAAQVNIVEEVHTVYRSQGVDIHDKHIEVIVHQMLRRITVIDSGDTDLLPGELVDKARFKAANMEAVKNGGKPAAGRPELMGITKASLATDSWLSAASFQETTRVLTEAALNQKVDDLKGLKENVIIGKLIPAGTGLARYRNATVEPDKAIRDTIYPNFGLGGEGTDSSFGDTDLSDVDFSNIDFGDLKLGDDFNPDDFLDDNGGQTDLGDTL.

Zn(2+)-binding residues include Cys-60, Cys-62, Cys-75, and Cys-78. Mg(2+) contacts are provided by Asp-536, Asp-538, and Asp-540. Zn(2+) is bound by residues Cys-895, Cys-974, Cys-981, and Cys-984.

It belongs to the RNA polymerase beta' chain family. As to quaternary structure, the RNAP catalytic core consists of 2 alpha, 1 beta, 1 beta' and 1 omega subunit. When a sigma factor is associated with the core the holoenzyme is formed, which can initiate transcription. Requires Mg(2+) as cofactor. It depends on Zn(2+) as a cofactor.

It catalyses the reaction RNA(n) + a ribonucleoside 5'-triphosphate = RNA(n+1) + diphosphate. DNA-dependent RNA polymerase catalyzes the transcription of DNA into RNA using the four ribonucleoside triphosphates as substrates. The polypeptide is DNA-directed RNA polymerase subunit beta' (Bifidobacterium adolescentis (strain ATCC 15703 / DSM 20083 / NCTC 11814 / E194a)).